A 396-amino-acid polypeptide reads, in one-letter code: Pinosylvin synthase 1 (396 aa).

Position 60–63 (60–63) interacts with substrate; that stretch reads KFKR. Cysteine 170 is a catalytic residue. Residues leucine 273 and 311-313 contribute to the substrate site; that span reads GGH.

It belongs to the thiolase-like superfamily. Chalcone/stilbene synthases family. In terms of assembly, homodimer.

The protein resides in the cytoplasm. The enzyme catalyses (E)-cinnamoyl-CoA + 3 malonyl-CoA + 3 H(+) = (E)-pinosylvin + 4 CO2 + 4 CoA. The catalysed reaction is 3-phenylpropanoyl-CoA + 3 malonyl-CoA + 3 H(+) = dihydropinosylvin + 4 CO2 + 4 CoA. Its pathway is phytoalexin biosynthesis; pinosylvin biosynthesis. In terms of biological role, catalyzes the production of pinosylvin from cinnamoyl-CoA and malonyl-CoA, and dihydropinosylvin from dihydrocinnamoyl-CoA. This Pinus strobus (Eastern white pine) protein is Pinosylvin synthase 1.